A 217-amino-acid polypeptide reads, in one-letter code: NAD(P)H-hydrate epimerase (217 aa).

The YjeF N-terminal domain maps to 1–217 (MRAIENAAMA…VAVADIGLSS (217 aa)). 48–52 (NNGGD) is a binding site for (6S)-NADPHX. K(+) is bound by residues Asn-49 and Asp-127. (6S)-NADPHX is bound by residues 131–137 (GIGQTRP) and Asp-165. Position 168 (Thr-168) interacts with K(+).

The protein belongs to the NnrE/AIBP family. K(+) is required as a cofactor.

The catalysed reaction is (6R)-NADHX = (6S)-NADHX. It carries out the reaction (6R)-NADPHX = (6S)-NADPHX. Catalyzes the epimerization of the S- and R-forms of NAD(P)HX, a damaged form of NAD(P)H that is a result of enzymatic or heat-dependent hydration. This is a prerequisite for the S-specific NAD(P)H-hydrate dehydratase to allow the repair of both epimers of NAD(P)HX. The sequence is that of NAD(P)H-hydrate epimerase from Cereibacter sphaeroides (strain KD131 / KCTC 12085) (Rhodobacter sphaeroides).